We begin with the raw amino-acid sequence, 310 residues long: Mas-related G-protein coupled receptor member E (310 aa).

Residues 1–22 (MTSLSVHTDSPSTQGEMAFNLT) lie on the Extracellular side of the membrane. The N-linked (GlcNAc...) asparagine glycan is linked to asparagine 20. Residues 23-43 (ILSLTELLSLGGLLGNGVALW) form a helical membrane-spanning segment. Over 44-60 (LLNQNVYRNPFSIYLLD) the chain is Cytoplasmic. Residues 61–81 (VACADLIFLCCHMVAIIPELL) traverse the membrane as a helical segment. The Extracellular portion of the chain corresponds to 82-92 (QDQLNFPEFVH). The helical transmembrane segment at 93 to 113 (ISLTMLRFFCYIVGLSLLAAI) threads the bilayer. Residues 114–133 (STEQCLATLFPAWYLCRRPR) are Cytoplasmic-facing. A helical membrane pass occupies residues 134–154 (YLTTCVCALIWVLCLLLDLLL). The Extracellular portion of the chain corresponds to 155–174 (SGACTQFFGAPSYHLCDMLW). Residues 175–195 (LVVAVLLAALCCTMCVTSLLL) traverse the membrane as a helical segment. The Cytoplasmic portion of the chain corresponds to 196-213 (LLRVERGPERHQPRGFPT). A helical transmembrane segment spans residues 214–234 (LVLLAVLLFLFCGLPFGIFWL). Residues 235–248 (SKNLSWHIPLYFYH) are Extracellular-facing. N-linked (GlcNAc...) asparagine glycosylation is present at asparagine 237. The helical transmembrane segment at 249–269 (FSFFMASVHSAAKPAIYFFLG) threads the bilayer. Over 270 to 310 (STPGQRFREPLRLVLQRALGDEAELGAGREASQGGLVDMTV) the chain is Cytoplasmic.

It belongs to the G-protein coupled receptor 1 family. Mas subfamily.

It localises to the cell membrane. Orphan receptor. May regulate nociceptor function and/or development, including the sensation or modulation of pain. The protein is Mas-related G-protein coupled receptor member E (Mrgpre) of Mus musculus (Mouse).